Reading from the N-terminus, the 332-residue chain is Nuclear migration protein nudC (332 aa).

Residues 122-161 (RQQLLDSAGGEPSASNRDGISKPIEKVDDESDKSELGKLM) form a disordered region. The 92-residue stretch at 168–259 (CTLENYTWTQ…NKMNWWSRLV (92 aa)) folds into the CS domain.

The protein belongs to the nudC family. Interacts with PCID2.

The protein resides in the cytoplasm. Its function is as follows. Chaperone protein with functions in nuclear localization and cytoplasmic mRNA trafficking. In postmitotic neurons, acts with nudE downstream of dar1 to ensure correct positioning of the nuclei in primary dendrites and as a consequence, is required for determining multipolar neuron morphology. Stabilizes PCID2 in the cytoplasm and thereby is required for promoting cytoplasmic mRNA trafficking. This is Nuclear migration protein nudC from Drosophila melanogaster (Fruit fly).